The chain runs to 487 residues: Probable glycine dehydrogenase (decarboxylating) subunit 2 (487 aa).

Residue lysine 269 is modified to N6-(pyridoxal phosphate)lysine.

The protein belongs to the GcvP family. C-terminal subunit subfamily. The glycine cleavage system is composed of four proteins: P, T, L and H. In this organism, the P 'protein' is a heterodimer of two subunits. Pyridoxal 5'-phosphate is required as a cofactor.

The catalysed reaction is N(6)-[(R)-lipoyl]-L-lysyl-[glycine-cleavage complex H protein] + glycine + H(+) = N(6)-[(R)-S(8)-aminomethyldihydrolipoyl]-L-lysyl-[glycine-cleavage complex H protein] + CO2. In terms of biological role, the glycine cleavage system catalyzes the degradation of glycine. The P protein binds the alpha-amino group of glycine through its pyridoxal phosphate cofactor; CO(2) is released and the remaining methylamine moiety is then transferred to the lipoamide cofactor of the H protein. The chain is Probable glycine dehydrogenase (decarboxylating) subunit 2 from Prosthecochloris aestuarii (strain DSM 271 / SK 413).